Consider the following 295-residue polypeptide: Phosphatidylserine decarboxylase proenzyme (295 aa).

Catalysis depends on charge relay system; for autoendoproteolytic cleavage activity residues Asp113, His169, and Ser256. Ser256 functions as the Schiff-base intermediate with substrate; via pyruvic acid; for decarboxylase activity in the catalytic mechanism. At Ser256 the chain carries Pyruvic acid (Ser); by autocatalysis.

It belongs to the phosphatidylserine decarboxylase family. PSD-B subfamily. Prokaryotic type II sub-subfamily. In terms of assembly, heterodimer of a large membrane-associated beta subunit and a small pyruvoyl-containing alpha subunit. Pyruvate serves as cofactor. Post-translationally, is synthesized initially as an inactive proenzyme. Formation of the active enzyme involves a self-maturation process in which the active site pyruvoyl group is generated from an internal serine residue via an autocatalytic post-translational modification. Two non-identical subunits are generated from the proenzyme in this reaction, and the pyruvate is formed at the N-terminus of the alpha chain, which is derived from the carboxyl end of the proenzyme. The autoendoproteolytic cleavage occurs by a canonical serine protease mechanism, in which the side chain hydroxyl group of the serine supplies its oxygen atom to form the C-terminus of the beta chain, while the remainder of the serine residue undergoes an oxidative deamination to produce ammonia and the pyruvoyl prosthetic group on the alpha chain. During this reaction, the Ser that is part of the protease active site of the proenzyme becomes the pyruvoyl prosthetic group, which constitutes an essential element of the active site of the mature decarboxylase.

It is found in the cell membrane. The catalysed reaction is a 1,2-diacyl-sn-glycero-3-phospho-L-serine + H(+) = a 1,2-diacyl-sn-glycero-3-phosphoethanolamine + CO2. Its pathway is phospholipid metabolism; phosphatidylethanolamine biosynthesis; phosphatidylethanolamine from CDP-diacylglycerol: step 2/2. In terms of biological role, catalyzes the formation of phosphatidylethanolamine (PtdEtn) from phosphatidylserine (PtdSer). This is Phosphatidylserine decarboxylase proenzyme from Clostridium novyi (strain NT).